A 1147-amino-acid chain; its full sequence is ATP-dependent helicase/deoxyribonuclease subunit B (1147 aa).

8–15 (GGSGAGKS) contacts ATP. Positions 780, 1092, 1095, and 1101 each coordinate [4Fe-4S] cluster.

This sequence belongs to the helicase family. AddB/RexB type 1 subfamily. As to quaternary structure, heterodimer of AddA and AddB. The cofactor is Mg(2+). [4Fe-4S] cluster is required as a cofactor.

Its function is as follows. The heterodimer acts as both an ATP-dependent DNA helicase and an ATP-dependent, dual-direction single-stranded exonuclease. Recognizes the chi site generating a DNA molecule suitable for the initiation of homologous recombination. The AddB subunit has 5' -&gt; 3' nuclease activity but not helicase activity. The protein is ATP-dependent helicase/deoxyribonuclease subunit B of Lachnoclostridium phytofermentans (strain ATCC 700394 / DSM 18823 / ISDg) (Clostridium phytofermentans).